We begin with the raw amino-acid sequence, 494 residues long: 4-trimethylaminobutyraldehyde dehydrogenase (494 aa).

Residue Ser-2 is modified to N-acetylserine. Lys-30 is subject to N6-acetyllysine; alternate. Lys-30 bears the N6-succinyllysine; alternate mark. An N6-succinyllysine modification is found at Lys-59. NAD(+) contacts are provided by residues Lys-180 and 232–236 (GSVPT). The Proton acceptor role is filled by Glu-254. The Nucleophile role is filled by Cys-288. Residues Lys-298 and Lys-344 each carry the N6-acetyllysine modification. Glu-391 provides a ligand contact to NAD(+).

The protein belongs to the aldehyde dehydrogenase family. As to quaternary structure, homotetramer.

Its subcellular location is the cytoplasm. The protein localises to the cytosol. It catalyses the reaction 4-(trimethylamino)butanal + NAD(+) + H2O = 4-(trimethylamino)butanoate + NADH + 2 H(+). The enzyme catalyses an aldehyde + NAD(+) + H2O = a carboxylate + NADH + 2 H(+). It carries out the reaction 4-aminobutanal + NAD(+) + H2O = 4-aminobutanoate + NADH + 2 H(+). The catalysed reaction is formaldehyde + NAD(+) + H2O = formate + NADH + 2 H(+). It catalyses the reaction acetaldehyde + NAD(+) + H2O = acetate + NADH + 2 H(+). The enzyme catalyses imidazole-4-acetaldehyde + NAD(+) + H2O = imidazole-4-acetate + NADH + 2 H(+). It carries out the reaction acrolein + NAD(+) + H2O = acrylate + NADH + 2 H(+). The catalysed reaction is (5-hydroxyindol-3-yl)acetaldehyde + NAD(+) + H2O = (5-hydroxyindol-3-yl)acetate + NADH + 2 H(+). It catalyses the reaction 3,4-dihydroxyphenylacetaldehyde + NAD(+) + H2O = 3,4-dihydroxyphenylacetate + NADH + 2 H(+). The enzyme catalyses spermine monoaldehyde + NAD(+) + H2O = N-(2-carboxyethyl)spermidine + NADH + 2 H(+). It carries out the reaction propanal + NAD(+) + H2O = propanoate + NADH + 2 H(+). The catalysed reaction is butanal + NAD(+) + H2O = butanoate + NADH + 2 H(+). It catalyses the reaction pentanal + NAD(+) + H2O = pentanoate + NADH + 2 H(+). The enzyme catalyses hexanal + NAD(+) + H2O = hexanoate + NADH + 2 H(+). The protein operates within amine and polyamine biosynthesis; carnitine biosynthesis. Functionally, converts gamma-trimethylaminobutyraldehyde into gamma-butyrobetaine with high efficiency (in vitro). Can catalyze the irreversible oxidation of a broad range of aldehydes to the corresponding acids in an NAD-dependent reaction, but with low efficiency. Catalyzes the oxidation of aldehydes arising from biogenic amines and polyamines. The protein is 4-trimethylaminobutyraldehyde dehydrogenase (ALDH9A1) of Bos taurus (Bovine).